The primary structure comprises 112 residues: Photosystem II reaction center Psb28 protein (112 aa).

The protein belongs to the Psb28 family. In terms of assembly, part of the photosystem II complex.

The protein resides in the plastid. It localises to the cyanelle thylakoid membrane. This Cyanophora paradoxa protein is Photosystem II reaction center Psb28 protein.